The following is a 247-amino-acid chain: 5-oxoprolinase subunit A (247 aa).

It belongs to the LamB/PxpA family. In terms of assembly, forms a complex composed of PxpA, PxpB and PxpC.

It carries out the reaction 5-oxo-L-proline + ATP + 2 H2O = L-glutamate + ADP + phosphate + H(+). Its function is as follows. Catalyzes the cleavage of 5-oxoproline to form L-glutamate coupled to the hydrolysis of ATP to ADP and inorganic phosphate. The sequence is that of 5-oxoprolinase subunit A from Vibrio vulnificus (strain CMCP6).